The primary structure comprises 1006 residues: Unconventional myosin-Id (1006 aa).

Alanine 2 is modified (N-acetylalanine). Residues 9–695 (FGKADFVLMD…TLFTLEELRA (687 aa)) enclose the Myosin motor domain. Position 102–109 (102–109 (GESGAGKT)) interacts with ATP. Serine 200 is subject to Phosphoserine. Tyrosine 536 is subject to Phosphotyrosine. Residues 572 to 594 (MIALVDNLASKEPYYVRCIKPND) are actin-binding. IQ domains lie at 699-719 (IRIV…MRYK) and 721-741 (TKAA…SYIH). A TH1 domain is found at 812-1005 (GQRADLGLQR…RSGFILSVPG (194 aa)).

It belongs to the TRAFAC class myosin-kinesin ATPase superfamily. Myosin family. Interacts (via the two IQ motifs) with calmodulin. Binds an additional calmodulin chain via a third, C-terminal region. Interacts with F-actin. Expressed in many tissues. Highest levels in brain, followed by lung and ovary; expression is lowest in spleen.

The protein resides in the cytoplasm. It localises to the perikaryon. It is found in the cell projection. Its subcellular location is the dendrite. The protein localises to the early endosome. The protein resides in the cell cortex. Unconventional myosin that functions as actin-based motor protein with ATPase activity. Plays a role in endosomal protein trafficking, and especially in the transfer of cargo proteins from early to recycling endosomes. Required for normal planar cell polarity in ciliated tracheal cells, for normal rotational polarity of cilia, and for coordinated, unidirectional ciliary movement in the trachea. Required for normal, polarized cilia organization in brain ependymal epithelial cells. The polypeptide is Unconventional myosin-Id (MYO1D) (Homo sapiens (Human)).